A 414-amino-acid chain; its full sequence is Enterobactin exporter EntS (414 aa).

The Cytoplasmic segment spans residues 1–21 (MNRQSWLLNLSLLKTHPAFRA). A helical transmembrane segment spans residues 22 to 42 (VFLARFISIVSLGLLGVAVPV). The Periplasmic segment spans residues 43 to 55 (QIQMMTHSTWQVG). Residues 56–76 (LSVTLTGGAMFIGLMVGGVLA) form a helical membrane-spanning segment. Topologically, residues 77 to 83 (DRYERKK) are cytoplasmic. The helical transmembrane segment at 84-104 (VILLARGTCGIGFIGLCVNAL) threads the bilayer. The Periplasmic segment spans residues 105 to 109 (LPEPS). The helical transmembrane segment at 110–130 (LLAIYLLGLWDGFFASLGVTA) threads the bilayer. Residues 131–156 (LLAATPALVGRENLMQAGAITMLTVR) are Cytoplasmic-facing. The chain crosses the membrane as a helical span at residues 157–177 (LGSVISPMLGGILLASGGVAW). Asn-178 is a topological domain (periplasmic). Residues 179-199 (YGLAAAGTFITLLPLLTLPRL) form a helical membrane-spanning segment. Residues 200–218 (PVPPQPRENPFIALLAAFR) are Cytoplasmic-facing. A helical membrane pass occupies residues 219–239 (FLLASPLIGGIALLGGLVTMA). The Periplasmic segment spans residues 240–256 (SAVRVLYPALAMSWQMS). A helical transmembrane segment spans residues 257–277 (AAQIGLLYAAIPLGAAIGALT). At 278 to 287 (SGQLAHSVRP) the chain is on the cytoplasmic side. The helical transmembrane segment at 288 to 307 (GLIMLVSTVGSFLAVGLFAI) threads the bilayer. The Periplasmic segment spans residues 308-313 (MPVWIA). Residues 314 to 336 (GVICLALFGWLSAISSLLQYTLL) form a helical membrane-spanning segment. At 337 to 356 (QTQTPENMLGRMNGLWTAQN) the chain is on the cytoplasmic side. The helical transmembrane segment at 357–377 (VTGDAIGAALLGGLGAMMTPV) threads the bilayer. Residue Ala-378 is a topological domain, periplasmic. The helical transmembrane segment at 379–399 (SASVSGFGLVIIGLLLLLVLG) threads the bilayer. At 400-414 (ELRRFRQTPPVSDAG) the chain is on the cytoplasmic side.

Belongs to the major facilitator superfamily. EntS (TC 2.A.1.38) family.

The protein resides in the cell inner membrane. Its function is as follows. Component of an export pathway for enterobactin. The protein is Enterobactin exporter EntS of Salmonella typhimurium (strain LT2 / SGSC1412 / ATCC 700720).